The following is a 244-amino-acid chain: Probable transcriptional regulatory protein MMOB1910 (244 aa).

Belongs to the TACO1 family.

The protein localises to the cytoplasm. This is Probable transcriptional regulatory protein MMOB1910 from Mycoplasma mobile (strain ATCC 43663 / 163K / NCTC 11711) (Mesomycoplasma mobile).